Consider the following 307-residue polypeptide: Methionyl-tRNA formyltransferase (307 aa).

Serine 110–proline 113 serves as a coordination point for (6S)-5,6,7,8-tetrahydrofolate.

It belongs to the Fmt family.

It catalyses the reaction L-methionyl-tRNA(fMet) + (6R)-10-formyltetrahydrofolate = N-formyl-L-methionyl-tRNA(fMet) + (6S)-5,6,7,8-tetrahydrofolate + H(+). Its function is as follows. Attaches a formyl group to the free amino group of methionyl-tRNA(fMet). The formyl group appears to play a dual role in the initiator identity of N-formylmethionyl-tRNA by promoting its recognition by IF2 and preventing the misappropriation of this tRNA by the elongation apparatus. This chain is Methionyl-tRNA formyltransferase, found in Rhodococcus erythropolis (strain PR4 / NBRC 100887).